We begin with the raw amino-acid sequence, 96 residues long: Beta-defensin 20 (96 aa).

A signal peptide spans 1–21; sequence MKLLQVLLVLLFVALADGAQP. 3 disulfides stabilise this stretch: Cys-24/Cys-52, Cys-32/Cys-46, and Cys-36/Cys-53.

It belongs to the beta-defensin family.

The protein localises to the secreted. Has antibacterial activity. This is Beta-defensin 20 (Defb20) from Mus musculus (Mouse).